Here is a 426-residue protein sequence, read N- to C-terminus: Gamma-glutamyl phosphate reductase (426 aa).

This sequence belongs to the gamma-glutamyl phosphate reductase family.

It localises to the cytoplasm. It catalyses the reaction L-glutamate 5-semialdehyde + phosphate + NADP(+) = L-glutamyl 5-phosphate + NADPH + H(+). It functions in the pathway amino-acid biosynthesis; L-proline biosynthesis; L-glutamate 5-semialdehyde from L-glutamate: step 2/2. Its function is as follows. Catalyzes the NADPH-dependent reduction of L-glutamate 5-phosphate into L-glutamate 5-semialdehyde and phosphate. The product spontaneously undergoes cyclization to form 1-pyrroline-5-carboxylate. The sequence is that of Gamma-glutamyl phosphate reductase from Cupriavidus metallidurans (strain ATCC 43123 / DSM 2839 / NBRC 102507 / CH34) (Ralstonia metallidurans).